We begin with the raw amino-acid sequence, 137 residues long: Small ribosomal subunit protein uS11 (137 aa).

Residues 116-137 (EDVTPIPHDGTRPKGGRRGRRV) form a disordered region.

Belongs to the universal ribosomal protein uS11 family. As to quaternary structure, part of the 30S ribosomal subunit.

Located on the platform of the 30S subunit. The chain is Small ribosomal subunit protein uS11 from Pyrococcus abyssi (strain GE5 / Orsay).